A 487-amino-acid polypeptide reads, in one-letter code: MTIKGGVVSQDFSAAFSTVACEPAGVVWNKVCTVLKRELGDAAFGSWIAPAVLREGPSGDVVVVTPTGIARDWIRRSAWRRVSELWTANDATGRRLDLKSRLEFESVGGAGYEAKAEPIEIVLPVSSDVPALAPTNGSKPSPVQGLQERFTFDTFVPGPANEFAHAVARRVASWADGHFNPVLFHGPYGFGKTHLLNALAWEAMRQAPTKRVVYLTAERFLSTFVRAVMDRQTAAFKEELRGADLLIIDDVHFIAGKQSSQEELFHTLTALVEDGRRVVFSSDRAPAAMTEMDARLRSHLSAGLVCGLEPADRALRIGILERKLQALSRQHGFEPTLRAEVLNFLADRFTDSVRELEGALNTLSARAGEGVSRLTLEEVQAILRPHLRAGEKRITIDDIQKATSEHYGMKQVDLLSERRNRAIARPRQAAMWLAKQLTTRSLPDIGRRFGGRDHTTVLHAVRRIEALRADDPVLSQDLETITRKLRG.

The domain I, interacts with DnaA modulators stretch occupies residues 1–92; it reads MTIKGGVVSQ…SELWTANDAT (92 aa). Residues 92-144 are domain II; sequence TGRRLDLKSRLEFESVGGAGYEAKAEPIEIVLPVSSDVPALAPTNGSKPSPVQ. Residues 145–367 form a domain III, AAA+ region region; the sequence is GLQERFTFDT…GALNTLSARA (223 aa). Gly189, Gly191, Lys192, and Thr193 together coordinate ATP. The interval 368-487 is domain IV, binds dsDNA; it reads GEGVSRLTLE…LETITRKLRG (120 aa).

The protein belongs to the DnaA family. In terms of assembly, oligomerizes as a right-handed, spiral filament on DNA at oriC.

The protein resides in the cytoplasm. In terms of biological role, plays an essential role in the initiation and regulation of chromosomal replication. ATP-DnaA binds to the origin of replication (oriC) to initiate formation of the DNA replication initiation complex once per cell cycle. Binds the DnaA box (a 9 base pair repeat at the origin) and separates the double-stranded (ds)DNA. Forms a right-handed helical filament on oriC DNA; dsDNA binds to the exterior of the filament while single-stranded (ss)DNA is stabiized in the filament's interior. The ATP-DnaA-oriC complex binds and stabilizes one strand of the AT-rich DNA unwinding element (DUE), permitting loading of DNA polymerase. After initiation quickly degrades to an ADP-DnaA complex that is not apt for DNA replication. Binds acidic phospholipids. This chain is Chromosomal replication initiator protein DnaA, found in Caulobacter sp. (strain K31).